A 279-amino-acid polypeptide reads, in one-letter code: Undecaprenyl-diphosphatase (279 aa).

Helical transmembrane passes span 2 to 22, 44 to 64, 85 to 105, 113 to 133, 163 to 183, 188 to 208, 223 to 243, and 255 to 275; these read LIIE…TEWL, AFIE…VMLI, WQLW…AVPL, FYFM…FIWI, VLSI…AIIL, TVAA…YSGL, AQVL…LLAI, and FTIF…YSFF.

The protein belongs to the UppP family.

It localises to the cell membrane. It catalyses the reaction di-trans,octa-cis-undecaprenyl diphosphate + H2O = di-trans,octa-cis-undecaprenyl phosphate + phosphate + H(+). Catalyzes the dephosphorylation of undecaprenyl diphosphate (UPP). Confers resistance to bacitracin. This Streptococcus pyogenes serotype M12 (strain MGAS2096) protein is Undecaprenyl-diphosphatase.